Here is a 284-residue protein sequence, read N- to C-terminus: 4-hydroxybenzoate octaprenyltransferase (284 aa).

The next 7 helical transmembrane spans lie at 33-53 (VIAA…LGVF), 93-113 (IGLF…MNPL), 136-156 (YLPQ…AWAA), 159-179 (GELP…TIAY), 209-229 (LVIG…GQHY), 231-248 (LGQS…LFVY), and 264-284 (AFLN…IAFW).

This sequence belongs to the UbiA prenyltransferase family. Mg(2+) serves as cofactor.

The protein resides in the cell inner membrane. The enzyme catalyses all-trans-octaprenyl diphosphate + 4-hydroxybenzoate = 4-hydroxy-3-(all-trans-octaprenyl)benzoate + diphosphate. It participates in cofactor biosynthesis; ubiquinone biosynthesis. Catalyzes the prenylation of para-hydroxybenzoate (PHB) with an all-trans polyprenyl group. Mediates the second step in the final reaction sequence of ubiquinone-8 (UQ-8) biosynthesis, which is the condensation of the polyisoprenoid side chain with PHB, generating the first membrane-bound Q intermediate 3-octaprenyl-4-hydroxybenzoate. The protein is 4-hydroxybenzoate octaprenyltransferase of Vibrio campbellii (strain ATCC BAA-1116).